A 232-amino-acid polypeptide reads, in one-letter code: Orotate phosphoribosyltransferase (232 aa).

5-phospho-alpha-D-ribose 1-diphosphate contacts are provided by residues R107, K108, K111, H113, and 133-141 (EDLTTAGGS). T137 contributes to the orotate binding site.

It belongs to the purine/pyrimidine phosphoribosyltransferase family. PyrE subfamily. Homodimer. The cofactor is Mg(2+).

It catalyses the reaction orotidine 5'-phosphate + diphosphate = orotate + 5-phospho-alpha-D-ribose 1-diphosphate. It functions in the pathway pyrimidine metabolism; UMP biosynthesis via de novo pathway; UMP from orotate: step 1/2. Functionally, catalyzes the transfer of a ribosyl phosphate group from 5-phosphoribose 1-diphosphate to orotate, leading to the formation of orotidine monophosphate (OMP). In Sinorhizobium medicae (strain WSM419) (Ensifer medicae), this protein is Orotate phosphoribosyltransferase.